The primary structure comprises 365 residues: UDP-N-acetylglucosamine--N-acetylmuramyl-(pentapeptide) pyrophosphoryl-undecaprenol N-acetylglucosamine transferase (365 aa).

UDP-N-acetyl-alpha-D-glucosamine is bound by residues 10–12 (TGG), Asn-128, Arg-170, Ser-199, Ile-250, and Gln-295.

The protein belongs to the glycosyltransferase 28 family. MurG subfamily.

Its subcellular location is the cell inner membrane. It carries out the reaction di-trans,octa-cis-undecaprenyl diphospho-N-acetyl-alpha-D-muramoyl-L-alanyl-D-glutamyl-meso-2,6-diaminopimeloyl-D-alanyl-D-alanine + UDP-N-acetyl-alpha-D-glucosamine = di-trans,octa-cis-undecaprenyl diphospho-[N-acetyl-alpha-D-glucosaminyl-(1-&gt;4)]-N-acetyl-alpha-D-muramoyl-L-alanyl-D-glutamyl-meso-2,6-diaminopimeloyl-D-alanyl-D-alanine + UDP + H(+). The protein operates within cell wall biogenesis; peptidoglycan biosynthesis. In terms of biological role, cell wall formation. Catalyzes the transfer of a GlcNAc subunit on undecaprenyl-pyrophosphoryl-MurNAc-pentapeptide (lipid intermediate I) to form undecaprenyl-pyrophosphoryl-MurNAc-(pentapeptide)GlcNAc (lipid intermediate II). This Chlorobium luteolum (strain DSM 273 / BCRC 81028 / 2530) (Pelodictyon luteolum) protein is UDP-N-acetylglucosamine--N-acetylmuramyl-(pentapeptide) pyrophosphoryl-undecaprenol N-acetylglucosamine transferase.